The sequence spans 470 residues: ATP synthase subunit beta (470 aa).

An ATP-binding site is contributed by 158–165 (GGAGVGKT).

The protein belongs to the ATPase alpha/beta chains family. In terms of assembly, F-type ATPases have 2 components, CF(1) - the catalytic core - and CF(0) - the membrane proton channel. CF(1) has five subunits: alpha(3), beta(3), gamma(1), delta(1), epsilon(1). CF(0) has three main subunits: a(1), b(2) and c(9-12). The alpha and beta chains form an alternating ring which encloses part of the gamma chain. CF(1) is attached to CF(0) by a central stalk formed by the gamma and epsilon chains, while a peripheral stalk is formed by the delta and b chains.

The protein localises to the cell membrane. It carries out the reaction ATP + H2O + 4 H(+)(in) = ADP + phosphate + 5 H(+)(out). Functionally, produces ATP from ADP in the presence of a proton gradient across the membrane. The catalytic sites are hosted primarily by the beta subunits. The polypeptide is ATP synthase subunit beta (Shouchella clausii (strain KSM-K16) (Alkalihalobacillus clausii)).